A 180-amino-acid polypeptide reads, in one-letter code: MLYTRLLRHNSQFTKFSGTSPNLGSKPLFSKGNLYTSLLVTTLYGTGLACLYLESNSLNKSKEQEDPHAIAEDDIVNIVHDAPNRIFKPALDTYQEKELDLQKSDLHKVLHSLTYSDVSQFSIVWGFLIQLSSLIGNSTLGKKSILYKGSVVSVLGFPPLIYMALKLRMKQLEKAGVRFE.

3 helical membrane passes run 34–54 (LYTS…LYLE), 121–141 (FSIV…STLG), and 145–165 (ILYK…YMAL).

It is found in the mitochondrion membrane. The protein is Mitochondrial membrane protein FMP33 (FMP33) of Saccharomyces cerevisiae (strain ATCC 204508 / S288c) (Baker's yeast).